The following is a 201-amino-acid chain: Putative 3-methyladenine DNA glycosylase (201 aa).

The protein belongs to the DNA glycosylase MPG family.

This chain is Putative 3-methyladenine DNA glycosylase, found in Clostridium novyi (strain NT).